The primary structure comprises 627 residues: MKGQETRGFQSEVKQLLHLMIHSLYSNKEIFLRELISNASDAADKLRFRALSTPELYAGDGDLRVRVSTDKEKRTLTISDNGIGMSRDEVIDNLGTIAKSGTKSFLESMGSDQVKDSQLIGQFGVGFYSAFIVADKVTVRTRAAGANADQGVYWESAGEGDYTIADITKDDRGTEITLHLREGEDEFLDDWRVRSVISKYSDHIALPVEIESQTESEEEGGESTVSWEKINKAQALWTRSKSEVSDDEYNEFYKHISHDFTDPLSWSHNRVEGKQEYTSLLYIPAHAPWDMWNRDHKHGLKLYVQRVFIMDDAEQFMPNYLRFVRGLIDSNDLPLNVSREILQDSRVTQNLRNALTKRVLQMLDKLAKDDAEKYQTFWQQFGLVLKEGPAEDGSNREAIAKLLRFATTQSDSSAQTVSLEDYVSRMVEGQDKIYYITADSYAAAKSSPHLELFRKKGIEVLLLSERIDEWMMSYLTEFDGKSFQSVSKADDTLDKLADEENDAQKEAQKALEPFVERVKTLLGERVKDVRFTYRLTDTPAIVVTDADEMSTQMAKLFAAAGQQAPEVKYIFELNPEHALIKRAADVSDEAEFGEWVELLLDQALLAERGTLDDPNLFIRRMNQLLSA.

The segment at 1–339 (MKGQETRGFQ…SNDLPLNVSR (339 aa)) is a; substrate-binding. Residues 340–555 (EILQDSRVTQ…ADEMSTQMAK (216 aa)) form a b region. Positions 556-627 (LFAAAGQQAP…IRRMNQLLSA (72 aa)) are c.

The protein belongs to the heat shock protein 90 family. As to quaternary structure, homodimer.

Its subcellular location is the cytoplasm. Functionally, molecular chaperone. Has ATPase activity. The chain is Chaperone protein HtpG from Pectobacterium atrosepticum (strain SCRI 1043 / ATCC BAA-672) (Erwinia carotovora subsp. atroseptica).